Consider the following 258-residue polypeptide: NAD kinase (258 aa).

D51 functions as the Proton acceptor in the catalytic mechanism. Residues 51–52 (DG), K56, 119–120 (ND), K130, D149, 160–165 (TAYSLS), and A184 each bind NAD(+).

This sequence belongs to the NAD kinase family. It depends on a divalent metal cation as a cofactor.

It localises to the cytoplasm. It catalyses the reaction NAD(+) + ATP = ADP + NADP(+) + H(+). Its function is as follows. Involved in the regulation of the intracellular balance of NAD and NADP, and is a key enzyme in the biosynthesis of NADP. Catalyzes specifically the phosphorylation on 2'-hydroxyl of the adenosine moiety of NAD to yield NADP. The sequence is that of NAD kinase from Thermotoga sp. (strain RQ2).